A 575-amino-acid chain; its full sequence is Proline--tRNA ligase (575 aa).

The protein belongs to the class-II aminoacyl-tRNA synthetase family. ProS type 1 subfamily. In terms of assembly, homodimer.

It localises to the cytoplasm. The catalysed reaction is tRNA(Pro) + L-proline + ATP = L-prolyl-tRNA(Pro) + AMP + diphosphate. In terms of biological role, catalyzes the attachment of proline to tRNA(Pro) in a two-step reaction: proline is first activated by ATP to form Pro-AMP and then transferred to the acceptor end of tRNA(Pro). As ProRS can inadvertently accommodate and process non-cognate amino acids such as alanine and cysteine, to avoid such errors it has two additional distinct editing activities against alanine. One activity is designated as 'pretransfer' editing and involves the tRNA(Pro)-independent hydrolysis of activated Ala-AMP. The other activity is designated 'posttransfer' editing and involves deacylation of mischarged Ala-tRNA(Pro). The misacylated Cys-tRNA(Pro) is not edited by ProRS. The protein is Proline--tRNA ligase of Anaeromyxobacter sp. (strain Fw109-5).